The sequence spans 141 residues: Large-conductance mechanosensitive channel (141 aa).

The next 2 helical transmembrane spans lie at valine 21–isoleucine 41 and glycine 85–valine 105.

The protein belongs to the MscL family. In terms of assembly, homopentamer.

It localises to the cell inner membrane. Channel that opens in response to stretch forces in the membrane lipid bilayer. May participate in the regulation of osmotic pressure changes within the cell. This chain is Large-conductance mechanosensitive channel, found in Dechloromonas aromatica (strain RCB).